The sequence spans 283 residues: Transport and Golgi organization protein 2 (283 aa).

Belongs to the Tango2 family.

It localises to the cytoplasm. The protein resides in the mitochondrion. It is found in the golgi apparatus. Its function is as follows. May play a role in Golgi organization. In Drosophila melanogaster (Fruit fly), this protein is Transport and Golgi organization protein 2 (Tango2).